The following is a 251-amino-acid chain: tRNA pseudouridine synthase A (251 aa).

Asp-52 acts as the Nucleophile in catalysis. Tyr-113 contributes to the substrate binding site.

It belongs to the tRNA pseudouridine synthase TruA family. As to quaternary structure, homodimer.

It catalyses the reaction uridine(38/39/40) in tRNA = pseudouridine(38/39/40) in tRNA. Formation of pseudouridine at positions 38, 39 and 40 in the anticodon stem and loop of transfer RNAs. This is tRNA pseudouridine synthase A from Brucella abortus (strain 2308).